The primary structure comprises 864 residues: MHERYVPADVEAAAQSDWRAADAYRSKEDANRKKFYCVSMLPYPSGKLHMGHVRNYTINDVMYRYLRMNGYNTLMPMGWDAFGMPAENAAMANGVPPAQWTYENIAYMKKQMQSMGLAIDWSREVTTCKPDYYKWNQWLFLKMLEKGVAYKKTGTVNWDPVDQTVLANEQVIDGRGWRSGALVEKREIPMYYMRITQYADELLNDLDGLGWPERVKVMQHNWIGKSFGVNFGFPYELDGEKKLLRVFTTRADTIMGVTFCAIAAEHPLAARLARDKPALQAFIDECKRGGVAEADIATMEKKGVATGFSVSHPLTGEPVEVWIGNYVLMSYGEGAVMGVPAHDERDFAFAKKYGLPIRQVIAVEGETYSTDAWQEWYGDKTRAVCVNSGKYDGLAHDAAVDAIAAELKAGGLGDKQITYRLRDWGISRQRYWGTPIPIIHCPSCGDVPVPEQDLPVVLPEDLVPDGTGNPLAKSDAFLNCTCPKCGAAAKRETDTMDTFVDSAWYFSRYAAPDAQTMVDARTDYWMPMDQYIGGIEHAILHLLYSRFWAKVMRDLGLVAFGEPAKNLLTQGMVLNETFYREDAAGKKTWYNPADVTVSFDDKGRPVGAVLKSDGQPVELGGIEKMSKSKNNGVDPQMLIDHYGADTARLFTMFAAPPEQQLEWSGAGVDGASRFLRRVWAFGFANREALAVRAPFDAAQLAEADKTLRREIHGVLKQADFDYQRLQYNTVVSAAMKMLNAIEGAKGATPAVLRETYGVLLRVLYPVVPHVTFELWKALGYADEFGPLLDAPWPKVDEAALEQAEIELVLQVNGKVRGALKVAKDASREAIEAAAVADGMFAKFAEGRPAKKIIVVPGRLVNVVV.

The 'HIGH' region signature appears at 42–52 (PYPSGKLHMGH). The 'KMSKS' region signature appears at 624-628 (KMSKS). Lys627 is an ATP binding site.

It belongs to the class-I aminoacyl-tRNA synthetase family.

Its subcellular location is the cytoplasm. It carries out the reaction tRNA(Leu) + L-leucine + ATP = L-leucyl-tRNA(Leu) + AMP + diphosphate. The chain is Leucine--tRNA ligase from Burkholderia pseudomallei (strain 1106a).